The sequence spans 54 residues: Photosystem II reaction center protein K (54 aa).

The propeptide occupies 1–17; that stretch reads MSFITLNNFFNTNTFFG. The helical transmembrane segment at 29–49 threads the bilayer; that stretch reads LIDVLPIIPVLFFLLAFVWQA.

Belongs to the PsbK family. As to quaternary structure, PSII is composed of 1 copy each of membrane proteins PsbA, PsbB, PsbC, PsbD, PsbE, PsbF, PsbH, PsbI, PsbJ, PsbK, PsbL, PsbM, PsbT, PsbY, PsbZ, Psb30/Ycf12, at least 3 peripheral proteins of the oxygen-evolving complex and a large number of cofactors. It forms dimeric complexes.

The protein resides in the plastid. Its subcellular location is the chloroplast thylakoid membrane. In terms of biological role, one of the components of the core complex of photosystem II (PSII). PSII is a light-driven water:plastoquinone oxidoreductase that uses light energy to abstract electrons from H(2)O, generating O(2) and a proton gradient subsequently used for ATP formation. It consists of a core antenna complex that captures photons, and an electron transfer chain that converts photonic excitation into a charge separation. The polypeptide is Photosystem II reaction center protein K (Euglena gracilis).